A 475-amino-acid polypeptide reads, in one-letter code: MNYEIVVGLEVHCQLNTESKAFCGCSAKFGKPANTNVCPVCLALPGALPVLNARVVEDAVKLGLATNCTIARHSILARKNYFYPDLPKGYQISQYEEPICSEGVIHIDLEEGGKDVRLVRIHIEEDAGKSIHDIGDDTYIDVNRCGVPLLEIVSYPDMRTPKEASAYLQKLRQIVRYLGISDGNMEEGSLRCDANVSVRPVGATEYGTRTEIKNMNSFRNVERAIEYEAKRHIEVIEGGGTIVQETRLWDADKLETRSMRGKEHAHDYRYFPDPDLVPVLVDDGMIRRMQEELPEFPEDRAARFVSEFGIPAYDAGVITVDRELADYFESTVKVSGDAKASSNWVMGEVMRTLKEKYLDIHKFAISPERLGGLIKLINAGAISNTIAKQVFEIMQQDEATAEAIVEREGLAQVSDRGAIEAAIREILEANQKQLEQYRSGKTQLFGFFVGQCMQKMKGKANPKMVNDILRSMLDA.

Belongs to the GatB/GatE family. GatB subfamily. Heterotrimer of A, B and C subunits.

The catalysed reaction is L-glutamyl-tRNA(Gln) + L-glutamine + ATP + H2O = L-glutaminyl-tRNA(Gln) + L-glutamate + ADP + phosphate + H(+). It catalyses the reaction L-aspartyl-tRNA(Asn) + L-glutamine + ATP + H2O = L-asparaginyl-tRNA(Asn) + L-glutamate + ADP + phosphate + 2 H(+). Allows the formation of correctly charged Asn-tRNA(Asn) or Gln-tRNA(Gln) through the transamidation of misacylated Asp-tRNA(Asn) or Glu-tRNA(Gln) in organisms which lack either or both of asparaginyl-tRNA or glutaminyl-tRNA synthetases. The reaction takes place in the presence of glutamine and ATP through an activated phospho-Asp-tRNA(Asn) or phospho-Glu-tRNA(Gln). The chain is Aspartyl/glutamyl-tRNA(Asn/Gln) amidotransferase subunit B from Chlorobaculum tepidum (strain ATCC 49652 / DSM 12025 / NBRC 103806 / TLS) (Chlorobium tepidum).